The primary structure comprises 253 residues: Tetraspanin-3 (253 aa).

The Cytoplasmic portion of the chain corresponds to 1 to 11; the sequence is MGQCGITSSKT. Residues 12–32 form a helical membrane-spanning segment; it reads VLVFLNLIFWGAAGILCYVGA. Residues 33 to 50 are Extracellular-facing; sequence YVFITYDDYDHFFEDVYT. A helical membrane pass occupies residues 51 to 71; it reads LIPAVVIIAVGALLFIIGLIG. At 72-85 the chain is on the cytoplasmic side; that stretch reads CCATIRESRCGLAT. A helical membrane pass occupies residues 86 to 106; that stretch reads FVIILLLVFVTEVVVVVLGYV. At 107-212 the chain is on the extracellular side; sequence YRAKVENEVD…KKLQEIMMHV (106 aa). N127, N152, N167, and N183 each carry an N-linked (GlcNAc...) asparagine glycan. A helical membrane pass occupies residues 213 to 233; sequence IWAALAFAAIQLLGMLCACIV. Residues 234-253 lie on the Cytoplasmic side of the membrane; the sequence is LCRRSRDPAYELLITGGAYA.

This sequence belongs to the tetraspanin (TM4SF) family. As to quaternary structure, interacts with claudin-11/CLDN11 and integrins.

It is found in the membrane. Functionally, regulates the proliferation and migration of oligodendrocytes, a process essential for normal myelination and repair. The sequence is that of Tetraspanin-3 (TSPAN3) from Bos taurus (Bovine).